The following is a 251-amino-acid chain: Vitamin B12 import ATP-binding protein BtuD (251 aa).

The ABC transporter domain maps to 2-236 (IRVNSLQVDS…EVLQSVFGTS (235 aa)). Position 30–37 (30–37 (GPNGCGKS)) interacts with ATP.

It belongs to the ABC transporter superfamily. Vitamin B12 importer (TC 3.A.1.13.1) family. The complex is composed of two ATP-binding proteins (BtuD), two transmembrane proteins (BtuC) and a solute-binding protein (BtuF).

The protein localises to the cell inner membrane. The enzyme catalyses an R-cob(III)alamin(out) + ATP + H2O = an R-cob(III)alamin(in) + ADP + phosphate + H(+). In terms of biological role, part of the ABC transporter complex BtuCDF involved in vitamin B12 import. Responsible for energy coupling to the transport system. The sequence is that of Vitamin B12 import ATP-binding protein BtuD from Vibrio cholerae serotype O1 (strain ATCC 39315 / El Tor Inaba N16961).